We begin with the raw amino-acid sequence, 536 residues long: Phosphoenolpyruvate carboxykinase (ATP) (536 aa).

The substrate site is built by Arg61, Tyr195, and Lys201. Residues Lys201, His220, and 236 to 244 contribute to the ATP site; that span reads GLSGTGKTT. 2 residues coordinate Mn(2+): Lys201 and His220. Residue Asp257 participates in Mn(2+) binding. Residues Glu285, Arg322, and Thr447 each contribute to the ATP site. Arg322 is a binding site for substrate.

This sequence belongs to the phosphoenolpyruvate carboxykinase (ATP) family. Mn(2+) is required as a cofactor.

It localises to the cytoplasm. It carries out the reaction oxaloacetate + ATP = phosphoenolpyruvate + ADP + CO2. The protein operates within carbohydrate biosynthesis; gluconeogenesis. Its function is as follows. Involved in the gluconeogenesis. Catalyzes the conversion of oxaloacetate (OAA) to phosphoenolpyruvate (PEP) through direct phosphoryl transfer between the nucleoside triphosphate and OAA. The protein is Phosphoenolpyruvate carboxykinase (ATP) of Agrobacterium fabrum (strain C58 / ATCC 33970) (Agrobacterium tumefaciens (strain C58)).